The primary structure comprises 627 residues: Chaperone protein DnaK (627 aa).

Thr197 carries the post-translational modification Phosphothreonine; by autocatalysis. Residues 596–615 show a composition bias toward low complexity; sequence MYAQGGDQGQQAAPQQEQSG. The disordered stretch occupies residues 596-627; it reads MYAQGGDQGQQAAPQQEQSGDNVEDVEFEEVK. A compositionally biased stretch (acidic residues) spans 617 to 627; it reads NVEDVEFEEVK.

Belongs to the heat shock protein 70 family.

In terms of biological role, acts as a chaperone. This chain is Chaperone protein DnaK, found in Flavobacterium johnsoniae (strain ATCC 17061 / DSM 2064 / JCM 8514 / BCRC 14874 / CCUG 350202 / NBRC 14942 / NCIMB 11054 / UW101) (Cytophaga johnsonae).